The sequence spans 282 residues: Transcription repressor MYB4 (282 aa).

2 consecutive HTH myb-type domains span residues 9 to 61 (KAHT…INYL) and 62 to 116 (RPDL…RRKL). DNA-binding regions (H-T-H motif) lie at residues 37 to 61 (WRSLPKAAGLLRCGKSCRLRWINYL) and 89 to 112 (WSLIAGRLPGRTDNEIKNYWNTHI). The segment at 119-145 (RGIDPTSHRPIQESSASQDSKPTQLEP) is disordered. Residues 130-145 (QESSASQDSKPTQLEP) show a composition bias toward polar residues.

Interacts with BHLH12/MYC1 and BHLH42/TT8. Interacts with SAD2. Widely expressed at low level. Highly expressed in siliques. Weakly expressed in seedlings, young and mature leaves, cauline leaves, stems, flower buds and roots.

Its subcellular location is the nucleus. Its function is as follows. Transcription repressor involved in regulation of protection against UV. Mediates transcriptional repression of CYP73A5, the gene encoding trans-cinnamate 4-monooxygenase, thereby regulating the accumulation of the UV-protectant compound sinapoylmalate. The chain is Transcription repressor MYB4 (MYB4) from Arabidopsis thaliana (Mouse-ear cress).